The following is a 384-amino-acid chain: Galactokinase (384 aa).

Position 34-37 (Glu-34–Asp-37) interacts with substrate. Residue Ser-123 to Ser-129 participates in ATP binding. Residues Ser-129 and Glu-161 each contribute to the Mg(2+) site. Catalysis depends on Asp-173, which acts as the Proton acceptor. A substrate-binding site is contributed by Tyr-222.

It belongs to the GHMP kinase family. GalK subfamily.

The protein resides in the cytoplasm. It carries out the reaction alpha-D-galactose + ATP = alpha-D-galactose 1-phosphate + ADP + H(+). The protein operates within carbohydrate metabolism; galactose metabolism. Its function is as follows. Catalyzes the transfer of the gamma-phosphate of ATP to D-galactose to form alpha-D-galactose-1-phosphate (Gal-1-P). This chain is Galactokinase, found in Haemophilus influenzae (strain PittGG).